The sequence spans 315 residues: Glutamyl-Q tRNA(Asp) synthetase (315 aa).

Residues 23–27 (RFAPS) and Glu-59 contribute to the L-glutamate site. A 'HIGH' region motif is present at residues 26-36 (PSPTGPLHIGS). The Zn(2+) site is built by Cys-115, Cys-117, Tyr-142, and Cys-146. Residues Tyr-202 and Arg-220 each contribute to the L-glutamate site. The 'KMSKS' region motif lies at 258–262 (KLSKQ). Position 261 (Lys-261) interacts with ATP.

Belongs to the class-I aminoacyl-tRNA synthetase family. GluQ subfamily. The cofactor is Zn(2+).

Catalyzes the tRNA-independent activation of glutamate in presence of ATP and the subsequent transfer of glutamate onto a tRNA(Asp). Glutamate is transferred on the 2-amino-5-(4,5-dihydroxy-2-cyclopenten-1-yl) moiety of the queuosine in the wobble position of the QUC anticodon. This chain is Glutamyl-Q tRNA(Asp) synthetase, found in Ralstonia nicotianae (strain ATCC BAA-1114 / GMI1000) (Ralstonia solanacearum).